We begin with the raw amino-acid sequence, 198 residues long: Peroxiredoxin-2 (198 aa).

Ala2 carries the post-translational modification N-acetylalanine. Residues 6 to 164 enclose the Thioredoxin domain; sequence AQIGKSAPDF…ALRLVQAFQY (159 aa). Position 11 is a phosphoserine (Ser11). Cys51 (cysteine sulfenic acid (-SOH) intermediate) is an active-site residue. At Ser112 the chain carries Phosphoserine. Thr182 bears the Phosphothreonine mark. Position 196 is an N6-acetyllysine (Lys196).

It belongs to the peroxiredoxin family. AhpC/Prx1 subfamily. As to quaternary structure, homodimer; disulfide-linked, upon oxidation. 5 homodimers assemble to form a ring-like decamer. Interacts with TIPIN. The enzyme can be inactivated by further oxidation of the cysteine sulfenic acid (C(P)-SOH) to sulphinic acid (C(P)-SO2H) instead of its condensation to a disulfide bond. It can be reactivated by forming a transient disulfide bond with sulfiredoxin SRXN1, which reduces the cysteine sulfinic acid in an ATP- and Mg-dependent manner. Post-translationally, acetylation increases resistance to transition to high molecular-mass complexes. Deacetylated by HDAC6 which decreases reducing activity. As to expression, widely expressed with highest levels in bone marrow. High levels also found in heart, brain, kidney and skeletal muscle. Lower levels in liver, lung and thymus.

The protein localises to the cytoplasm. It catalyses the reaction a hydroperoxide + [thioredoxin]-dithiol = an alcohol + [thioredoxin]-disulfide + H2O. Thiol-specific peroxidase that catalyzes the reduction of hydrogen peroxide and organic hydroperoxides to water and alcohols, respectively. Plays a role in cell protection against oxidative stress by detoxifying peroxides and as sensor of hydrogen peroxide-mediated signaling events. Might participate in the signaling cascades of growth factors and tumor necrosis factor-alpha by regulating the intracellular concentrations of H(2)O(2). The protein is Peroxiredoxin-2 (Prdx2) of Mus musculus (Mouse).